Consider the following 208-residue polypeptide: MLEAKELTCARDERVLFSQLSFTVGAGNIVQIEGPNGAGKTSLLRILAGLSRPESGEILWNQTAVGRQRDIWQREMLYLGHLPGVKGVLSPLENLRFFHPDCSDEQIFDALDEVDLTGYEDAIVAQLSAGQQRRVALARLWLSQARLWILDEPLTAIDKAGVEKIMSQFASHAGRGGSVILTTHQDLPDQQDVVRKIRLTAEGRDECW.

Residues 2 to 206 (LEAKELTCAR…IRLTAEGRDE (205 aa)) form the ABC transporter domain. Residue 34–41 (GPNGAGKT) participates in ATP binding.

It belongs to the ABC transporter superfamily. CcmA exporter (TC 3.A.1.107) family. As to quaternary structure, the complex is composed of two ATP-binding proteins (CcmA) and two transmembrane proteins (CcmB).

It is found in the cell inner membrane. It carries out the reaction heme b(in) + ATP + H2O = heme b(out) + ADP + phosphate + H(+). Part of the ABC transporter complex CcmAB involved in the biogenesis of c-type cytochromes; once thought to export heme, this seems not to be the case, but its exact role is uncertain. Responsible for energy coupling to the transport system. This is Cytochrome c biogenesis ATP-binding export protein CcmA from Tatumella citrea (Pantoea citrea).